The following is a 392-amino-acid chain: Protein trapped in endoderm-1 (392 aa).

The Extracellular segment spans residues 1–39; it reads MDQDMGMATGYFQDADMQMDEPAAATQSIYPHSATLFAA. Residues 40–60 form a helical membrane-spanning segment; sequence ISACVFVTIGVLGNLITLLAL. At 61 to 73 the chain is on the cytoplasmic side; the sequence is LKSPTIREHATTA. The helical transmembrane segment at 74–94 threads the bilayer; the sequence is FVISLSISDLLFCSFSLPLTA. The Extracellular portion of the chain corresponds to 95–110; it reads VRFFQESWTFGTTLCK. The helical transmembrane segment at 111 to 131 threads the bilayer; sequence IFPVIFYGNVAVSLLSMVGIT. Over 132–156 the chain is Cytoplasmic; it reads LNRYILIACHSRYSQIYKPKFITLQ. Residues 157 to 177 traverse the membrane as a helical segment; that stretch reads LLFVWAVSFLLLLPPILGIWG. Topologically, residues 178–202 are extracellular; sequence EMGLDEATFSCTILKKEGRSIKKTL. The chain crosses the membrane as a helical span at residues 203 to 223; that stretch reads FVIGFLLPCLVIIVSYSCIYI. Residues 224–268 are Cytoplasmic-facing; sequence TVLHQKKKIRNHDNFQIAAAKGSSSSGGGSYMTTTCTRKAREDNR. Residues 269 to 289 traverse the membrane as a helical segment; the sequence is LTVMMVTIFLCFLVCFLPLML. Over 290-302 the chain is Extracellular; it reads ANVVDDERNTSYP. A glycan (N-linked (GlcNAc...) asparagine) is linked at Asn298. A helical membrane pass occupies residues 303–323; sequence WLHIIASVMAWASSVINPIIY. Residues 324 to 392 are Cytoplasmic-facing; the sequence is AASNRNYRVA…INQMCQTYSV (69 aa). Residues Ser359, Ser362, and Ser366 each carry the phosphoserine modification. Position 372 is a phosphothreonine (Thr372).

Belongs to the G-protein coupled receptor 1 family. In embryos, expression is seen at highest levels in the cuprophilic cells and at lower levels in the amnioserosa, developing CNS, cardiac mesoderm primordium and midline glia.

It is found in the cell membrane. Functionally, essential for the first active step of germ cell migration: transepithelial migration of germ cells through the posterior midgut (PMG) epithelium. This is Protein trapped in endoderm-1 (Tre1) from Drosophila melanogaster (Fruit fly).